The sequence spans 1399 residues: DNA-directed RNA polymerase subunit beta' (1399 aa).

Residues C70, C72, C85, and C88 each coordinate Zn(2+). Residues D460, D462, and D464 each coordinate Mg(2+). Residues C814, C888, C895, and C898 each coordinate Zn(2+). The tract at residues 1367-1399 (SERKRQRDLGKPQRVSASEAEAALTEALNSSGN) is disordered. A compositionally biased stretch (low complexity) spans 1382–1399 (SASEAEAALTEALNSSGN).

Belongs to the RNA polymerase beta' chain family. As to quaternary structure, the RNAP catalytic core consists of 2 alpha, 1 beta, 1 beta' and 1 omega subunit. When a sigma factor is associated with the core the holoenzyme is formed, which can initiate transcription. It depends on Mg(2+) as a cofactor. Zn(2+) serves as cofactor.

It carries out the reaction RNA(n) + a ribonucleoside 5'-triphosphate = RNA(n+1) + diphosphate. Its function is as follows. DNA-dependent RNA polymerase catalyzes the transcription of DNA into RNA using the four ribonucleoside triphosphates as substrates. The protein is DNA-directed RNA polymerase subunit beta' of Pseudomonas paraeruginosa (strain DSM 24068 / PA7) (Pseudomonas aeruginosa (strain PA7)).